A 182-amino-acid chain; its full sequence is MFKWYVVQVFTAQEKKVKKSLEDFKEASGMSDFIQQIILPSENVMEVKKGEHKIVEKYIWPGYLLVKMHLTDESWSYVKKTQGVVEFLGGGAPVALSEEEVKNILADLEEKKSGVVQKHKFEVGSQVKINDGVFVNFVGVVSEVFHDKGRLSVMVSIFGRETRVDDLEFWQVEEVVPGQESE.

It belongs to the NusG family.

Functionally, participates in transcription elongation, termination and antitermination. This Chlamydia trachomatis serovar D (strain ATCC VR-885 / DSM 19411 / UW-3/Cx) protein is Transcription termination/antitermination protein NusG.